Here is an 80-residue protein sequence, read N- to C-terminus: MSQEEILQKVCSIVSEQLSVESGEVKSDSNFQNDLGADSLDTVELVMALEEAFDIEIPDEAAEGIATVGDAVKFIEAKKG.

The Carrier domain maps to 1-79 (MSQEEILQKV…DAVKFIEAKK (79 aa)). O-(pantetheine 4'-phosphoryl)serine is present on Ser39.

Belongs to the acyl carrier protein (ACP) family. 4'-phosphopantetheine is transferred from CoA to a specific serine of apo-ACP by AcpS. This modification is essential for activity because fatty acids are bound in thioester linkage to the sulfhydryl of the prosthetic group.

Its subcellular location is the cytoplasm. Its pathway is lipid metabolism; fatty acid biosynthesis. Functionally, carrier of the growing fatty acid chain in fatty acid biosynthesis. The chain is Acyl carrier protein from Prochlorococcus marinus (strain MIT 9515).